The primary structure comprises 219 residues: Thiopurine S-methyltransferase (219 aa).

S-adenosyl-L-methionine is bound by residues Trp-10, Leu-45, Glu-66, and Arg-130.

Belongs to the class I-like SAM-binding methyltransferase superfamily. TPMT family.

It is found in the cytoplasm. It catalyses the reaction S-adenosyl-L-methionine + a thiopurine = S-adenosyl-L-homocysteine + a thiopurine S-methylether.. The sequence is that of Thiopurine S-methyltransferase from Psychrobacter cryohalolentis (strain ATCC BAA-1226 / DSM 17306 / VKM B-2378 / K5).